The sequence spans 505 residues: 2,3-bisphosphoglycerate-independent phosphoglycerate mutase (505 aa).

Asp-15 and Ser-65 together coordinate Mn(2+). The active-site Phosphoserine intermediate is Ser-65. Substrate contacts are provided by residues His-126, 156-157, Arg-187, Arg-193, 260-263, and Lys-333; these read RD and RPDR. Residues Asp-398, His-402, Asp-439, His-440, and His-457 each contribute to the Mn(2+) site.

This sequence belongs to the BPG-independent phosphoglycerate mutase family. Monomer. Mn(2+) serves as cofactor.

It carries out the reaction (2R)-2-phosphoglycerate = (2R)-3-phosphoglycerate. Its pathway is carbohydrate degradation; glycolysis; pyruvate from D-glyceraldehyde 3-phosphate: step 3/5. Catalyzes the interconversion of 2-phosphoglycerate and 3-phosphoglycerate. This Mycoplasmopsis pulmonis (strain UAB CTIP) (Mycoplasma pulmonis) protein is 2,3-bisphosphoglycerate-independent phosphoglycerate mutase.